A 124-amino-acid chain; its full sequence is Ubiquitin-related modifier 1 (124 aa).

Residues 34–53 form a disordered region; the sequence is IPSLVPKDNTTSAKNPPPKD. Residue G124 is modified to 1-thioglycine. G124 participates in a covalent cross-link: Glycyl lysine isopeptide (Gly-Lys) (interchain with K-? in acceptor proteins).

This sequence belongs to the URM1 family. Post-translationally, C-terminal thiocarboxylation occurs in 2 steps, it is first acyl-adenylated (-COAMP) via the hesA/moeB/thiF part of UBA4, then thiocarboxylated (-COSH) via the rhodanese domain of UBA4.

The protein localises to the cytoplasm. Its pathway is tRNA modification; 5-methoxycarbonylmethyl-2-thiouridine-tRNA biosynthesis. Its function is as follows. Acts as a sulfur carrier required for 2-thiolation of mcm(5)S(2)U at tRNA wobble positions of cytosolic tRNA(Lys), tRNA(Glu) and tRNA(Gln). Serves as sulfur donor in tRNA 2-thiolation reaction by being thiocarboxylated (-COSH) at its C-terminus by the MOCS3 homolog UBA4. The sulfur is then transferred to tRNA to form 2-thiolation of mcm(5)S(2)U. Prior mcm(5) tRNA modification by the elongator complex is required for 2-thiolation. Also acts as a ubiquitin-like protein (UBL) that is covalently conjugated via an isopeptide bond to lysine residues of target proteins such as AHP1. The thiocarboxylated form serves as substrate for conjugation and oxidative stress specifically induces the formation of UBL-protein conjugates. The protein is Ubiquitin-related modifier 1 of Coprinopsis cinerea (strain Okayama-7 / 130 / ATCC MYA-4618 / FGSC 9003) (Inky cap fungus).